A 264-amino-acid chain; its full sequence is DNA-directed RNA polymerase subunit Rpo3 (264 aa).

The [3Fe-4S] cluster site is built by Cys203, Cys206, and Cys209.

Belongs to the archaeal Rpo3/eukaryotic RPB3 RNA polymerase subunit family. As to quaternary structure, part of the RNA polymerase complex. Requires [3Fe-4S] cluster as cofactor.

The protein resides in the cytoplasm. The enzyme catalyses RNA(n) + a ribonucleoside 5'-triphosphate = RNA(n+1) + diphosphate. DNA-dependent RNA polymerase (RNAP) catalyzes the transcription of DNA into RNA using the four ribonucleoside triphosphates as substrates. The chain is DNA-directed RNA polymerase subunit Rpo3 from Methanothermobacter thermautotrophicus (strain ATCC 29096 / DSM 1053 / JCM 10044 / NBRC 100330 / Delta H) (Methanobacterium thermoautotrophicum).